Reading from the N-terminus, the 440-residue chain is UDP-N-acetylglucosamine 1-carboxyvinyltransferase (440 aa).

22–23 (KN) is a binding site for phosphoenolpyruvate. Arg-102 provides a ligand contact to UDP-N-acetyl-alpha-D-glucosamine. Cys-126 functions as the Proton donor in the catalytic mechanism. Cys-126 carries the post-translational modification 2-(S-cysteinyl)pyruvic acid O-phosphothioketal. UDP-N-acetyl-alpha-D-glucosamine is bound by residues 131 to 135 (RPVDQ), Asp-320, and Ile-342.

The protein belongs to the EPSP synthase family. MurA subfamily.

The protein localises to the cytoplasm. The catalysed reaction is phosphoenolpyruvate + UDP-N-acetyl-alpha-D-glucosamine = UDP-N-acetyl-3-O-(1-carboxyvinyl)-alpha-D-glucosamine + phosphate. It participates in cell wall biogenesis; peptidoglycan biosynthesis. Cell wall formation. Adds enolpyruvyl to UDP-N-acetylglucosamine. The chain is UDP-N-acetylglucosamine 1-carboxyvinyltransferase from Acidovorax ebreus (strain TPSY) (Diaphorobacter sp. (strain TPSY)).